A 213-amino-acid polypeptide reads, in one-letter code: Endoplasmic reticulum vesicle protein 25 (213 aa).

Positions 1-20 are cleaved as a signal peptide; the sequence is MILRIPSLLYLFTLLTAVYA. Residues 21 to 181 are Lumenal-facing; it reads VKFDLTSDRN…TNESTNQRVK (161 aa). The GOLD domain occupies 33–122; it reads PKCIWNFASA…VRSVELDVDI (90 aa). Residues 182-202 form a helical membrane-spanning segment; it reads VFSVLIICCTIGLGVWQLLHL. At 203-213 the chain is on the cytoplasmic side; sequence RSFFKRKYLID.

It belongs to the EMP24/GP25L family.

Its subcellular location is the endoplasmic reticulum membrane. It localises to the golgi apparatus membrane. In terms of biological role, constituent of COPII-coated endoplasmic reticulum-derived transport vesicles. Required for efficient transport of a subset of secretory proteins to the Golgi. Facilitates retrograde transport from the Golgi to the endoplasmic reticulum. This is Endoplasmic reticulum vesicle protein 25 (ERV25) from Cryptococcus neoformans var. neoformans serotype D (strain JEC21 / ATCC MYA-565) (Filobasidiella neoformans).